The following is a 145-amino-acid chain: D-aminoacyl-tRNA deacylase (145 aa).

Positions 137–138 match the Gly-cisPro motif, important for rejection of L-amino acids motif; sequence GP.

It belongs to the DTD family. In terms of assembly, homodimer.

Its subcellular location is the cytoplasm. It carries out the reaction glycyl-tRNA(Ala) + H2O = tRNA(Ala) + glycine + H(+). The enzyme catalyses a D-aminoacyl-tRNA + H2O = a tRNA + a D-alpha-amino acid + H(+). In terms of biological role, an aminoacyl-tRNA editing enzyme that deacylates mischarged D-aminoacyl-tRNAs. Also deacylates mischarged glycyl-tRNA(Ala), protecting cells against glycine mischarging by AlaRS. Acts via tRNA-based rather than protein-based catalysis; rejects L-amino acids rather than detecting D-amino acids in the active site. By recycling D-aminoacyl-tRNA to D-amino acids and free tRNA molecules, this enzyme counteracts the toxicity associated with the formation of D-aminoacyl-tRNA entities in vivo and helps enforce protein L-homochirality. The sequence is that of D-aminoacyl-tRNA deacylase from Pseudomonas putida (strain GB-1).